A 602-amino-acid chain; its full sequence is Bifunctional lycopene cyclase/phytoene synthase (602 aa).

The tract at residues 1–238 (MLTYMEVHLY…LVFASCATDR (238 aa)) is lycopene beta-cyclase. 7 helical membrane passes run 7-27 (VHLY…KPFF), 35-55 (YIFL…YIVY), 69-89 (VIGY…LITV), 110-130 (PVFQ…TIAA), 142-162 (PFYG…LWIG), 173-193 (AVLF…QYAI), and 211-231 (LPSL…VLVF). The interval 245–602 (IYITPMNHNK…RGKSQAFTVI (358 aa)) is phytoene synthase.

It in the N-terminal section; belongs to the lycopene beta-cyclase family. The protein in the C-terminal section; belongs to the phytoene/squalene synthase family.

Its subcellular location is the membrane. The catalysed reaction is all-trans-lycopene = gamma-carotene. The enzyme catalyses gamma-carotene = all-trans-beta-carotene. It catalyses the reaction 2 (2E,6E,10E)-geranylgeranyl diphosphate = 15-cis-phytoene + 2 diphosphate. The protein operates within carotenoid biosynthesis; beta-carotene biosynthesis. Its pathway is carotenoid biosynthesis; phytoene biosynthesis; all-trans-phytoene from geranylgeranyl diphosphate: step 1/1. Bifunctional enzyme that catalyzes the reactions from geranylgeranyl diphosphate to phytoene (phytoene synthase) and lycopene to beta-carotene via the intermediate gamma-carotene (lycopene cyclase). This is Bifunctional lycopene cyclase/phytoene synthase from Phycomyces blakesleeanus (strain ATCC 8743b / DSM 1359 / FGSC 10004 / NBRC 33097 / NRRL 1555).